Here is a 161-residue protein sequence, read N- to C-terminus: Cyclic pyranopterin monophosphate synthase (161 aa).

Residues 73–75 and 110–111 contribute to the substrate site; these read LCH and ME. The active site involves aspartate 125.

Belongs to the MoaC family. In terms of assembly, homohexamer; trimer of dimers.

The catalysed reaction is (8S)-3',8-cyclo-7,8-dihydroguanosine 5'-triphosphate = cyclic pyranopterin phosphate + diphosphate. It participates in cofactor biosynthesis; molybdopterin biosynthesis. Catalyzes the conversion of (8S)-3',8-cyclo-7,8-dihydroguanosine 5'-triphosphate to cyclic pyranopterin monophosphate (cPMP). In Pseudomonas savastanoi pv. phaseolicola (strain 1448A / Race 6) (Pseudomonas syringae pv. phaseolicola (strain 1448A / Race 6)), this protein is Cyclic pyranopterin monophosphate synthase.